Reading from the N-terminus, the 456-residue chain is Probable glycine dehydrogenase (decarboxylating) subunit 1 (456 aa).

The protein belongs to the GcvP family. N-terminal subunit subfamily. As to quaternary structure, the glycine cleavage system is composed of four proteins: P, T, L and H. In this organism, the P 'protein' is a heterodimer of two subunits.

The catalysed reaction is N(6)-[(R)-lipoyl]-L-lysyl-[glycine-cleavage complex H protein] + glycine + H(+) = N(6)-[(R)-S(8)-aminomethyldihydrolipoyl]-L-lysyl-[glycine-cleavage complex H protein] + CO2. The glycine cleavage system catalyzes the degradation of glycine. The P protein binds the alpha-amino group of glycine through its pyridoxal phosphate cofactor; CO(2) is released and the remaining methylamine moiety is then transferred to the lipoamide cofactor of the H protein. This chain is Probable glycine dehydrogenase (decarboxylating) subunit 1, found in Legionella pneumophila (strain Corby).